We begin with the raw amino-acid sequence, 1908 residues long: Putative ankyrin repeat protein L484 (1908 aa).

5 ANK repeats span residues 20 to 50 (DIMEQFFLTIKTGDIDKIRNFVAQNKNKFNI), 60 to 97 (PNKTPIHAVLELDDRIADQETKLTIIKYLDKMGAPMDL), 101 to 130 (DNVWPIHLAAADQDEDIIDYMLKNKVSIDR), 134 to 167 (SNNTPLHYAVYGKQVPCFDKVKVGSIVPPQDIDK), and 1370 to 1399 (DGNTPLHLAISMTNPDIVEILLKHGANPFT). Residues 1539-1603 (VQLLNPKLRD…QTNISDLEFK (65 aa)) adopt a coiled-coil conformation.

The protein resides in the virion. This chain is Putative ankyrin repeat protein L484, found in Acanthamoeba polyphaga mimivirus (APMV).